A 116-amino-acid polypeptide reads, in one-letter code: Large ribosomal subunit protein uL22 (116 aa).

It belongs to the universal ribosomal protein uL22 family. In terms of assembly, part of the 50S ribosomal subunit.

This protein binds specifically to 23S rRNA; its binding is stimulated by other ribosomal proteins, e.g. L4, L17, and L20. It is important during the early stages of 50S assembly. It makes multiple contacts with different domains of the 23S rRNA in the assembled 50S subunit and ribosome. In terms of biological role, the globular domain of the protein is located near the polypeptide exit tunnel on the outside of the subunit, while an extended beta-hairpin is found that lines the wall of the exit tunnel in the center of the 70S ribosome. This chain is Large ribosomal subunit protein uL22, found in Orientia tsutsugamushi (strain Boryong) (Rickettsia tsutsugamushi).